The following is a 169-amino-acid chain: MILGLALVPSKSFQDEVNAYRKRYDNHYAQIMPHITIKPQFEIDDHDFNLIKNEVKNRISSIKPVEVHATKASNFAPVSNVIYFKVAKTESLEQLFNQFNTEDFYGIAEHPFVPHFTIAQGLTSQEFEDIYGQVKLAGVDHREIIEELSLLQYSEEEDKWTIIETFTLG.

The Proton donor role is filled by histidine 34. 2 consecutive short sequence motifs (HXTX) follow at residues 34 to 37 (HITI) and 115 to 118 (HFTI). Residue histidine 115 is the Proton acceptor of the active site.

Belongs to the 2H phosphoesterase superfamily. YjcG family.

This chain is Putative phosphoesterase SE_0715, found in Staphylococcus epidermidis (strain ATCC 12228 / FDA PCI 1200).